The sequence spans 433 residues: Serine hydroxymethyltransferase (433 aa).

Residues L133 and 137-139 (GHL) contribute to the (6S)-5,6,7,8-tetrahydrofolate site. K242 is subject to N6-(pyridoxal phosphate)lysine. 366 to 368 (SPF) lines the (6S)-5,6,7,8-tetrahydrofolate pocket.

The protein belongs to the SHMT family. As to quaternary structure, homodimer. Pyridoxal 5'-phosphate is required as a cofactor.

It localises to the cytoplasm. It catalyses the reaction (6R)-5,10-methylene-5,6,7,8-tetrahydrofolate + glycine + H2O = (6S)-5,6,7,8-tetrahydrofolate + L-serine. Its pathway is one-carbon metabolism; tetrahydrofolate interconversion. It participates in amino-acid biosynthesis; glycine biosynthesis; glycine from L-serine: step 1/1. In terms of biological role, catalyzes the reversible interconversion of serine and glycine with tetrahydrofolate (THF) serving as the one-carbon carrier. This reaction serves as the major source of one-carbon groups required for the biosynthesis of purines, thymidylate, methionine, and other important biomolecules. Also exhibits THF-independent aldolase activity toward beta-hydroxyamino acids, producing glycine and aldehydes, via a retro-aldol mechanism. The chain is Serine hydroxymethyltransferase from Beijerinckia indica subsp. indica (strain ATCC 9039 / DSM 1715 / NCIMB 8712).